The following is a 117-amino-acid chain: Immunoglobulin kappa variable 9-129 (117 aa).

The N-terminal stretch at 1-22 (MDMRAPAQVFGFLLLWFPGARC) is a signal peptide. The framework-1 stretch occupies residues 23-45 (DIQMTQSPSSLSASLGERVSLTC). Residues Cys-45 and Cys-110 are joined by a disulfide bond. The segment at 46-56 (RASQDIHGYLN) is complementarity-determining-1. Residues 57-71 (LFQQKPGETIKHLIY) form a framework-2 region. The interval 72–78 (ETSNLDS) is complementarity-determining-2. Residues 79 to 110 (GVPKRFSGSRSGSDYSLIIGSLESEDFADYYC) form a framework-3 region. The segment at 111-117 (LQYASSP) is complementarity-determining-3.

This Mus musculus (Mouse) protein is Immunoglobulin kappa variable 9-129.